A 796-amino-acid chain; its full sequence is Protocadherin beta-3 (796 aa).

The signal sequence occupies residues 1–26 (MEAGGERFLRQRQVLLLFVFLGGSLA). The Extracellular portion of the chain corresponds to 27–690 (GSESRRYSVA…AQADLLTVYL (664 aa)). Cadherin domains follow at residues 35 to 133 (VAEE…SPVF), 138 to 242 (MHLK…APEF), 247 to 347 (YEVA…PPEL), 352 to 451 (VNSP…APAF), and 456 to 561 (YTLF…SPFV). Asn169 carries N-linked (GlcNAc...) asparagine glycosylation. Residues Asn418 and Asn436 are each glycosylated (N-linked (GlcNAc...) asparagine). A glycan (N-linked (GlcNAc...) asparagine) is linked at Asn567. Positions 568–671 (GSAPCTELVP…LVDGFSQPYL (104 aa)) constitute a Cadherin 6 domain. A helical transmembrane segment spans residues 691-711 (VVALASVSSLFLFSVLLFVAV). The Cytoplasmic segment spans residues 712–796 (RLCRRSRAAS…PSFRKSFEFS (85 aa)).

The protein resides in the cell membrane. Functionally, potential calcium-dependent cell-adhesion protein. May be involved in the establishment and maintenance of specific neuronal connections in the brain. This Pan troglodytes (Chimpanzee) protein is Protocadherin beta-3 (PCDHB3).